The chain runs to 152 residues: Transcriptional regulator MraZ (152 aa).

SpoVT-AbrB domains are found at residues 5 to 52 (ATLV…PLPE) and 81 to 124 (ASEC…DETT).

It belongs to the MraZ family. Forms oligomers.

It is found in the cytoplasm. Its subcellular location is the nucleoid. Functionally, negatively regulates its own expression and that of the subsequent genes in the proximal part of the division and cell wall (dcw) gene cluster. Acts by binding directly to DNA. May also regulate the expression of genes outside the dcw cluster. This is Transcriptional regulator MraZ from Escherichia coli O127:H6 (strain E2348/69 / EPEC).